The chain runs to 509 residues: Histidine--tRNA ligase, cytoplasmic (509 aa).

The residue at position 2 (A2) is an N-acetylalanine. Residues 3–59 (ERAALEELVKLQGERVRGLKQQKASAELIEEEVAKLLKLKAQLGPDESKQKFVLKTP) enclose the WHEP-TRS domain. Position 66 is a phosphoserine (S66). L-histidine-binding positions include 130–132 (DLT), R157, Q173, D177, R326, and 330–331 (YY). The residue at position 356 (S356) is a Phosphoserine.

This sequence belongs to the class-II aminoacyl-tRNA synthetase family. In terms of assembly, homodimer.

The protein resides in the cytoplasm. The enzyme catalyses tRNA(His) + L-histidine + ATP = L-histidyl-tRNA(His) + AMP + diphosphate + H(+). In terms of biological role, catalyzes the ATP-dependent ligation of histidine to the 3'-end of its cognate tRNA, via the formation of an aminoacyl-adenylate intermediate (His-AMP). Plays a role in axon guidance. This chain is Histidine--tRNA ligase, cytoplasmic (HARS1), found in Pongo abelii (Sumatran orangutan).